The chain runs to 288 residues: Capsid protein (288 aa).

An N-acetylalanine; by host modification is found at Ala-2.

Belongs to the high plain virus capsid family.

The protein localises to the virion. This is Capsid protein from High plains virus (isolate Kansas 2004).